A 295-amino-acid polypeptide reads, in one-letter code: Ribosomal protein L11 methyltransferase (295 aa).

S-adenosyl-L-methionine contacts are provided by Thr146, Gly167, Asp189, and Asn231.

This sequence belongs to the methyltransferase superfamily. PrmA family.

The protein resides in the cytoplasm. The enzyme catalyses L-lysyl-[protein] + 3 S-adenosyl-L-methionine = N(6),N(6),N(6)-trimethyl-L-lysyl-[protein] + 3 S-adenosyl-L-homocysteine + 3 H(+). Functionally, methylates ribosomal protein L11. In Vibrio parahaemolyticus serotype O3:K6 (strain RIMD 2210633), this protein is Ribosomal protein L11 methyltransferase.